The following is a 206-amino-acid chain: Ribosomal RNA small subunit methyltransferase G (206 aa).

S-adenosyl-L-methionine-binding positions include G73, L78, 124–125 (VE), and R139.

This sequence belongs to the methyltransferase superfamily. RNA methyltransferase RsmG family.

The protein resides in the cytoplasm. It carries out the reaction guanosine(527) in 16S rRNA + S-adenosyl-L-methionine = N(7)-methylguanosine(527) in 16S rRNA + S-adenosyl-L-homocysteine. Its function is as follows. Specifically methylates the N7 position of guanine in position 527 of 16S rRNA. This Edwardsiella ictaluri (strain 93-146) protein is Ribosomal RNA small subunit methyltransferase G.